A 238-amino-acid polypeptide reads, in one-letter code: MSTHIDAPKGAIADVVLLPGDPLRAQYIAENFLDNAQRYNTVRNAFGFTGTFEGRRVSVQATGMGIPSISIYVNELIQDYGVKTLIRVGTAGGMGENVKVRDVVLAQGSSTDSSIILNTFGAGLYFAPLADFNLLREAANLADTSAIRYHVGNVLGEDRFYNDEMDRQKLIDYEVLATEMETPALYLLAAKYHVHALSILTVSNHLVTGEETSAQERQTSFNDMIGLALGVAKTVPDR.

Residue histidine 4 coordinates a purine D-ribonucleoside. Residues glycine 20, arginine 24, arginine 43, and 87–90 (RVGT) contribute to the phosphate site. Residues 179 to 181 (EME) and 203 to 204 (SN) each bind a purine D-ribonucleoside.

This sequence belongs to the PNP/UDP phosphorylase family. Homohexamer; trimer of homodimers.

It catalyses the reaction a purine D-ribonucleoside + phosphate = a purine nucleobase + alpha-D-ribose 1-phosphate. The catalysed reaction is a purine 2'-deoxy-D-ribonucleoside + phosphate = a purine nucleobase + 2-deoxy-alpha-D-ribose 1-phosphate. In terms of biological role, catalyzes the reversible phosphorolytic breakdown of the N-glycosidic bond in the beta-(deoxy)ribonucleoside molecules, with the formation of the corresponding free purine bases and pentose-1-phosphate. In Lacticaseibacillus casei (strain BL23) (Lactobacillus casei), this protein is Purine nucleoside phosphorylase DeoD-type.